The chain runs to 366 residues: Aminomethyltransferase (366 aa).

The protein belongs to the GcvT family. In terms of assembly, the glycine cleavage system is composed of four proteins: P, T, L and H.

The enzyme catalyses N(6)-[(R)-S(8)-aminomethyldihydrolipoyl]-L-lysyl-[protein] + (6S)-5,6,7,8-tetrahydrofolate = N(6)-[(R)-dihydrolipoyl]-L-lysyl-[protein] + (6R)-5,10-methylene-5,6,7,8-tetrahydrofolate + NH4(+). Functionally, the glycine cleavage system catalyzes the degradation of glycine. This chain is Aminomethyltransferase, found in Bacillus cytotoxicus (strain DSM 22905 / CIP 110041 / 391-98 / NVH 391-98).